The chain runs to 341 residues: GTP-binding protein GTR2 (341 aa).

GTP is bound by residues Ser23, Ser24, Ser43, His124, and Asp127.

The protein belongs to the GTR/RAG GTP-binding protein family. Heterodimer; with GTR1. Component of the GSE complex composed of GTR1, GTR2, SLM4, MEH1 and LTV1. Component of the EGO complex, at least composed of GTR2, SLM4 and MEH1. Interacts with GTR1; the interaction is direct.

The protein resides in the vacuole membrane. It catalyses the reaction GTP + H2O = GDP + phosphate + H(+). Functionally, GTPase involved in activation of the TORC1 signaling pathway, which promotes growth and represses autophagy in nutrient-rich conditions. Also required for TORC1 inactivation during nitrogen starvation. Required for intracellular sorting of GAP1 out of the endosome. Involved in the regulation of microautophagy. This is GTP-binding protein GTR2 from Saccharomyces cerevisiae (strain ATCC 204508 / S288c) (Baker's yeast).